A 368-amino-acid chain; its full sequence is Putative alcohol dehydrogenase D (368 aa).

Residues Cys-40, His-61, Cys-91, Cys-94, Cys-97, Cys-105, and Cys-167 each coordinate Zn(2+).

The protein belongs to the zinc-containing alcohol dehydrogenase family. Zn(2+) serves as cofactor.

The enzyme catalyses a primary alcohol + NAD(+) = an aldehyde + NADH + H(+). It catalyses the reaction a secondary alcohol + NAD(+) = a ketone + NADH + H(+). Its function is as follows. Required for maintaining the appropriate mycolic acid composition and permeability of the envelope on its exposure to acidic pH. The chain is Putative alcohol dehydrogenase D (adhD) from Mycobacterium tuberculosis (strain CDC 1551 / Oshkosh).